We begin with the raw amino-acid sequence, 249 residues long: NAD(P)H-quinone oxidoreductase subunit K (249 aa).

Residues cysteine 65, cysteine 66, cysteine 130, and cysteine 161 each contribute to the [4Fe-4S] cluster site.

Belongs to the complex I 20 kDa subunit family. In terms of assembly, NDH-1 can be composed of about 15 different subunits; different subcomplexes with different compositions have been identified which probably have different functions. The cofactor is [4Fe-4S] cluster.

The protein localises to the cellular thylakoid membrane. The catalysed reaction is a plastoquinone + NADH + (n+1) H(+)(in) = a plastoquinol + NAD(+) + n H(+)(out). It carries out the reaction a plastoquinone + NADPH + (n+1) H(+)(in) = a plastoquinol + NADP(+) + n H(+)(out). Its function is as follows. NDH-1 shuttles electrons from an unknown electron donor, via FMN and iron-sulfur (Fe-S) centers, to quinones in the respiratory and/or the photosynthetic chain. The immediate electron acceptor for the enzyme in this species is believed to be plastoquinone. Couples the redox reaction to proton translocation, and thus conserves the redox energy in a proton gradient. Cyanobacterial NDH-1 also plays a role in inorganic carbon-concentration. This chain is NAD(P)H-quinone oxidoreductase subunit K, found in Prochlorococcus marinus (strain NATL2A).